Here is a 1099-residue protein sequence, read N- to C-terminus: ATP-dependent helicase/deoxyribonuclease subunit B (1099 aa).

The [4Fe-4S] cluster site is built by cysteine 766, cysteine 1056, cysteine 1059, and cysteine 1065.

Belongs to the helicase family. AddB/RexB type 2 subfamily. In terms of assembly, heterodimer of AddA and RexB. Mg(2+) is required as a cofactor. The cofactor is [4Fe-4S] cluster.

In terms of biological role, the heterodimer acts as both an ATP-dependent DNA helicase and an ATP-dependent, dual-direction single-stranded exonuclease. Recognizes the chi site generating a DNA molecule suitable for the initiation of homologous recombination. This subunit has 5' -&gt; 3' nuclease activity but not helicase activity. This is ATP-dependent helicase/deoxyribonuclease subunit B from Lactococcus lactis subsp. cremoris (strain SK11).